The primary structure comprises 131 residues: Agouti-signaling protein (131 aa).

An N-terminal signal peptide occupies residues 1–20 (MNIFRLLLATLLVSLCFLTA). The N-linked (GlcNAc...) asparagine glycan is linked to N38. A disordered region spans residues 57–104 (KSKKISRKEAEKKRSSKKKASMKNVARPRPPPPNPCVATRNSCKSPAP). Cystine bridges form between C92/C107, C99/C113, C106/C124, C110/C131, and C115/C122. One can recognise an Agouti domain in the interval 92–131 (CVATRNSCKSPAPACCDPCASCQCRFFRSACTCRVLSPSC).

Its subcellular location is the secreted. Functionally, involved in the regulation of melanogenesis. The binding of ASP to MC1R precludes alpha-MSH initiated signaling and thus blocks production of cAMP, leading to a down-regulation of eumelanogenesis (brown/black pigment) and thus increasing synthesis of pheomelanin (yellow/red pigment). The polypeptide is Agouti-signaling protein (ASIP) (Vulpes vulpes (Red fox)).